The following is a 548-amino-acid chain: Glucan endo-1,3-beta-glucosidase (548 aa).

The tat-type signal signal peptide spans 1-36 (MPHDRKNSSRRAWAALCAAVLAVSGALVGVAAPASA). The interval 37–430 (VPATIPLTIT…AGTGALRIGS (394 aa)) is possesses beta-glucanase activity, but is unable to lyse viable cells. The region spanning 38 to 396 (PATIPLTITN…PQAAYIKLDP (359 aa)) is the GH64 domain. Residue Glu-153 is the Proton donor of the active site. The active-site Proton acceptor is the Asp-169. One can recognise a Ricin B-type lectin domain in the interval 422-548 (GTGALRIGST…NQTEAQRWTL (127 aa)). Residues 472 to 548 (GKCLDVARSG…NQTEAQRWTL (77 aa)) are essential for the lytic activity, but not for the beta-glucanase function.

This sequence belongs to the glycosyl hydrolase 64 family. Post-translationally, predicted to be exported by the Tat system. The position of the signal peptide cleavage has been experimentally proven.

It localises to the periplasm. The enzyme catalyses Hydrolysis of (1-&gt;3)-beta-D-glucosidic linkages in (1-&gt;3)-beta-D-glucans.. Its function is as follows. Lysis of cellular walls containing beta-1,3-glucans. Implicated in the defense against fungal pathogens. The chain is Glucan endo-1,3-beta-glucosidase from Cellulosimicrobium cellulans (Arthrobacter luteus).